A 74-amino-acid polypeptide reads, in one-letter code: Large ribosomal subunit protein uL29 (74 aa).

It belongs to the universal ribosomal protein uL29 family.

The sequence is that of Large ribosomal subunit protein uL29 from Cyanothece sp. (strain PCC 7425 / ATCC 29141).